The primary structure comprises 501 residues: Vitamin D 25-hydroxylase (501 aa).

Alanine 250 provides a ligand contact to substrate. Residue cysteine 448 coordinates heme.

It belongs to the cytochrome P450 family. In terms of assembly, homodimer. Heme is required as a cofactor. In terms of tissue distribution, highly expressed in the liver and testis.

It localises to the endoplasmic reticulum membrane. The protein localises to the microsome membrane. It catalyses the reaction calciol + reduced [NADPH--hemoprotein reductase] + O2 = calcidiol + oxidized [NADPH--hemoprotein reductase] + H2O + H(+). It carries out the reaction vitamin D2 + reduced [NADPH--hemoprotein reductase] + O2 = 25-hydroxyvitamin D2 + oxidized [NADPH--hemoprotein reductase] + H2O + H(+). The enzyme catalyses 1alpha-hydroxyvitamin D2 + reduced [NADPH--hemoprotein reductase] + O2 = 1alpha,25-dihydroxyvitamin D2 + oxidized [NADPH--hemoprotein reductase] + H2O + H(+). The catalysed reaction is alfacalcidol + reduced [NADPH--hemoprotein reductase] + O2 = calcitriol + oxidized [NADPH--hemoprotein reductase] + H2O + H(+). It participates in hormone biosynthesis; vitamin D biosynthesis. Its function is as follows. A cytochrome P450 monooxygenase involved in activation of vitamin D precursors. Catalyzes hydroxylation at C-25 of both forms of vitamin D, vitamin D(2) and D(3) (calciol). Can metabolize vitamin D analogs/prodrugs 1alpha-hydroxyvitamin D(2) (doxercalciferol) and 1alpha-hydroxyvitamin D(3) (alfacalcidol) forming 25-hydroxy derivatives. Mechanistically, uses molecular oxygen inserting one oxygen atom into a substrate, and reducing the second into a water molecule, with two electrons provided by NADPH via cytochrome P450 reductase (CPR; NADPH-ferrihemoprotein reductase). This is Vitamin D 25-hydroxylase (Cyp2r1) from Mus musculus (Mouse).